Consider the following 124-residue polypeptide: Small ribosomal subunit protein bS6 (124 aa).

The interval 98–124 is disordered; that stretch reads EASPMLKAREERPRREDVREEAEEAAE. Positions 104–115 are enriched in basic and acidic residues; that stretch reads KAREERPRREDV.

It belongs to the bacterial ribosomal protein bS6 family.

In terms of biological role, binds together with bS18 to 16S ribosomal RNA. This chain is Small ribosomal subunit protein bS6, found in Tolumonas auensis (strain DSM 9187 / NBRC 110442 / TA 4).